The following is a 248-amino-acid chain: Probable 2-oxo-3-(5-oxofuran-2-ylidene)propanoate lactonase (248 aa).

Catalysis depends on residues Cys123, Asp180, and His212.

It belongs to the dienelactone hydrolase family.

It carries out the reaction 2-oxo-3-(5-oxofuran-2-ylidene)propanoate + H2O = 3-maleylpyruvate + H(+). Its function is as follows. Involved in the 5-nitroanthranilic acid (5NAA) degradation. Catalyzes the hydrolysis of the lactone to produce maleylpyruvate biodegradation of 5-nitroanthranilate. The chain is Probable 2-oxo-3-(5-oxofuran-2-ylidene)propanoate lactonase (naaC) from Bradyrhizobium sp.